We begin with the raw amino-acid sequence, 610 residues long: MSQTSLKQKKNEPGMRSSKESLEAEKRKESDKTGVRLSNQMRRAVNPNHSLRCCPFQGHSSCRRCLCAAEGTALGPCHTIRIYIHMCLLWEQGQQITMMRGSQESSLRKTDSRGYLVRSQWSRISRSPSTKAPSIDEPRSRNTSAKLPSSSTSSRTPSTSPSLHDSSPPPLSGQPSLQPPASPQLPRSLDSRPPTPPEPDPGSRRSTKMQENPEAWAQGIVREIRQTRDSQPLEYSRTSPTEWKSSSQRRGIYPASTQLDRNSLSEQQQQQREDEDDYEAAYWASMRSFYEKNPSCSRPWPPKPKNAITIALSSCALFNMVDGRKIYEQEGLEKYMEYQLTNENVILTPGPAFRFVKALQYVNARLRDLYPDEQDLFDIVLMTNNHAQVGVRLINSVNHYGLLIDRFCLTGGKDPIGYLKAYLTNLYIAADSEKVQEAIQEGIASATMFDGAKDMAYCDTQLRVAFDGDAVLFSDESEHFTKEHGLDKFFQYDTLCESKPLAQGPLKGFLEDLGRLQKKFYAKNERLLCPIRTYLVTARSAASSGARVLKTLRRWGLEIDEALFLAGAPKSPILVKIRPHIFFDDHMFHIEGAQRLGSIAAYGFNKKFSS.

2 disordered regions span residues 1–34 (MSQT…DKTG) and 101–277 (GSQE…DEDD). Residues 9–34 (KKNEPGMRSSKESLEAEKRKESDKTG) show a composition bias toward basic and acidic residues. Polar residues predominate over residues 119-132 (SQWSRISRSPSTKA). A compositionally biased stretch (low complexity) spans 148–166 (PSSSTSSRTPSTSPSLHDS). Pro residues predominate over residues 167–183 (SPPPLSGQPSLQPPASP). Over residues 236-265 (SRTSPTEWKSSSQRRGIYPASTQLDRNSLS) the composition is skewed to polar residues. The active-site Nucleophile is Asp467.

It belongs to the 5'-nucleotidase type 3 family. Mg(2+) is required as a cofactor. Highly expressed in testis, placenta and pancreas. Detected at lower levels in heart, kidney, liver and lung.

It is found in the cytoplasm. The enzyme catalyses a ribonucleoside 5'-phosphate + H2O = a ribonucleoside + phosphate. It catalyses the reaction AMP + H2O = adenosine + phosphate. Its activity is regulated as follows. Activated by ADP. Functionally, catalyzes the hydrolysis of nucleotide monophosphates, releasing inorganic phosphate and the corresponding nucleoside, AMP is the major substrate. The sequence is that of Cytosolic 5'-nucleotidase 1B (NT5C1B) from Homo sapiens (Human).